Here is a 453-residue protein sequence, read N- to C-terminus: Ribulose bisphosphate carboxylase large chain (453 aa).

Residues 1–2 (MS) constitute a propeptide that is removed on maturation. At Pro-3 the chain carries N-acetylproline. N6,N6,N6-trimethyllysine is present on Lys-14. 2 residues coordinate substrate: Asn-123 and Thr-173. The Proton acceptor role is filled by Lys-175. A substrate-binding site is contributed by Lys-177. Mg(2+) is bound by residues Lys-201, Asp-203, and Glu-204. An N6-carboxylysine modification is found at Lys-201. Catalysis depends on His-294, which acts as the Proton acceptor. Positions 295, 327, and 379 each coordinate substrate.

This sequence belongs to the RuBisCO large chain family. Type I subfamily. In terms of assembly, heterohexadecamer of 8 large chains and 8 small chains; disulfide-linked. The disulfide link is formed within the large subunit homodimers. Requires Mg(2+) as cofactor. In terms of processing, the disulfide bond which can form in the large chain dimeric partners within the hexadecamer appears to be associated with oxidative stress and protein turnover.

It localises to the plastid. Its subcellular location is the chloroplast. The catalysed reaction is 2 (2R)-3-phosphoglycerate + 2 H(+) = D-ribulose 1,5-bisphosphate + CO2 + H2O. It catalyses the reaction D-ribulose 1,5-bisphosphate + O2 = 2-phosphoglycolate + (2R)-3-phosphoglycerate + 2 H(+). In terms of biological role, ruBisCO catalyzes two reactions: the carboxylation of D-ribulose 1,5-bisphosphate, the primary event in carbon dioxide fixation, as well as the oxidative fragmentation of the pentose substrate in the photorespiration process. Both reactions occur simultaneously and in competition at the same active site. This is Ribulose bisphosphate carboxylase large chain from Sherardia arvensis (Blue field-madder).